We begin with the raw amino-acid sequence, 188 residues long: MKINANLIRPGNILEHNGRQYAVLKTQIVQPGKGGAFITVEMRDIRTGNKTNERWRTADTIEKCNVEAKECTFLFKDDSNMTFMDSESFEQFTMPNDTLGDTIGFLQDGMVVEVDFVEGSPVSITLPEKVVMKVVEADPVVKGQTASSSYKPAKLENGMKILVPPFLEEGEVIIVNTTDCSYVERFKG.

The protein belongs to the elongation factor P family.

It localises to the cytoplasm. It functions in the pathway protein biosynthesis; polypeptide chain elongation. Its function is as follows. Involved in peptide bond synthesis. Stimulates efficient translation and peptide-bond synthesis on native or reconstituted 70S ribosomes in vitro. Probably functions indirectly by altering the affinity of the ribosome for aminoacyl-tRNA, thus increasing their reactivity as acceptors for peptidyl transferase. The chain is Elongation factor P from Paramagnetospirillum magneticum (strain ATCC 700264 / AMB-1) (Magnetospirillum magneticum).